Here is a 344-residue protein sequence, read N- to C-terminus: Tripartite motif-containing protein 44 (344 aa).

Disordered regions lie at residues 1 to 25 (MASG…EPDE) and 66 to 165 (AWTP…EFDP). Residues 75–92 (GAGKEEAEVKVEQEREIE) are compositionally biased toward basic and acidic residues. Residues 93–165 (SEAGEESESE…ETEAESEFDP (73 aa)) show a composition bias toward acidic residues. Residues 174 to 215 (VAKRKCPDHGLDLSTYCQEDRQLICVLCPVIGAHQGHQLSTL) form a B box-type zinc finger. 4 residues coordinate Zn(2+): C179, H182, C201, and H207. Residues 290-325 (AHVTEILADIQSHMDRLMTQMAQAKEQLDTSNESAE) adopt a coiled-coil conformation. Residues 309-344 (QMAQAKEQLDTSNESAEPKAEGDEEGPSGASEEEDT) form a disordered region. Acidic residues predominate over residues 330-344 (GDEEGPSGASEEEDT). 2 positions are modified to phosphoserine: S336 and S339.

As to quaternary structure, interacts (via coiled coil) with TRIM17 (via coiled coil). As to expression, highly expressed in testis.

In terms of biological role, may play a role in the process of differentiation and maturation of neuronal cells. May regulate the activity of TRIM17. Is a negative regulator of PAX6 expression. The chain is Tripartite motif-containing protein 44 (TRIM44) from Homo sapiens (Human).